A 676-amino-acid chain; its full sequence is ATP-dependent RNA helicase dbp-9 (676 aa).

The tract at residues 1-97 (MAKRKLNETD…SEKDDADLTF (97 aa)) is disordered. Residues 70 to 90 (QQLKDEQKQQDEKDEKKQSEK) are compositionally biased toward basic and acidic residues. A Q motif motif is present at residues 95–123 (LTFSDLGLDPRLVQAVAKQSFEKPTLVQR). A Helicase ATP-binding domain is found at 126-304 (IPLALAGQDV…KGFFCRNPTM (179 aa)). 139–146 (AKTGSGKT) lines the ATP pocket. A DEAD box motif is present at residues 251 to 254 (DEAD). Residues 317-541 (KLTQFYVKCG…PYNFNKDQME (225 aa)) enclose the Helicase C-terminal domain. Residues 410 to 432 (EDEKTEEKKEEQGEKKEGDEKKN) show a composition bias toward basic and acidic residues. Disordered regions lie at residues 410 to 444 (EDEK…RRDQ) and 633 to 676 (FKKQ…RVRK). The span at 642-663 (TRGKKGAKGGKGGHGKYKKGPG) shows a compositional bias: basic residues.

It belongs to the DEAD box helicase family. DDX56/DBP9 subfamily.

It is found in the nucleus. It localises to the nucleolus. The catalysed reaction is ATP + H2O = ADP + phosphate + H(+). Functionally, ATP-binding RNA helicase involved in the biogenesis of 60S ribosomal subunits and is required for the normal formation of 25S and 5.8S rRNAs. This chain is ATP-dependent RNA helicase dbp-9 (dbp-9), found in Neurospora crassa (strain ATCC 24698 / 74-OR23-1A / CBS 708.71 / DSM 1257 / FGSC 987).